Here is a 611-residue protein sequence, read N- to C-terminus: Protein ral2 (611 aa).

Kelch repeat units follow at residues 43–91 (EAFV…HSGD), 96–149 (KLIF…EVNG), and 175–224 (YLII…VINK). Position 604 is a phosphoserine (Ser-604).

Essential for mating and for recognition of the mating pheromone, and for the determination of cell shape. Implicated in activation of the ras1 protein. This is Protein ral2 (ral2) from Schizosaccharomyces pombe (strain 972 / ATCC 24843) (Fission yeast).